A 144-amino-acid polypeptide reads, in one-letter code: Neuritin-B (144 aa).

The signal sequence occupies residues 1–27; sequence MGLKLSGRYIFLVLAVHLAYLLQAVKA. Ser-114 is lipidated: GPI-anchor amidated serine. Residues 115 to 144 constitute a propeptide, removed in mature form; it reads TGAPGPRLLFPAFLPLLIVFLSALLNWVLQ.

The protein belongs to the neuritin family.

Its subcellular location is the cell membrane. In terms of biological role, modulates postsynaptic dendritic arbor elaboration and synaptic maturation. The sequence is that of Neuritin-B (nrn1-b) from Xenopus laevis (African clawed frog).